A 931-amino-acid chain; its full sequence is Netrin receptor UNC5C (931 aa).

An N-terminal signal peptide occupies residues 1 to 40 (MRKGLRATAARCGLGLGYLLQMLVLPALALLSASGTGSAA). Topologically, residues 41 to 380 (QDDEFFHELP…APDSDDVALY (340 aa)) are extracellular. In terms of domain architecture, Ig-like spans 62–159 (PHFLIEPEEA…AGTTKSRKAY (98 aa)). 9 disulfide bridges follow: Cys-83-Cys-144, Cys-95-Cys-142, Cys-188-Cys-239, Cys-272-Cys-309, Cys-276-Cys-313, Cys-287-Cys-299, Cys-328-Cys-362, Cys-332-Cys-367, and Cys-340-Cys-352. Positions 161-256 (RIAYLRKTFE…KRKSTTATVI (96 aa)) constitute an Ig-like C2-type domain. Asn-236 carries an N-linked (GlcNAc...) asparagine glycan. TSP type-1 domains lie at 260 to 314 (NGGW…TLCP) and 316 to 368 (DGRW…GLCM). The N-linked (GlcNAc...) asparagine glycan is linked to Asn-361. Residues 381-401 (VGIVIAVTVCLAITVVVALFV) form a helical membrane-spanning segment. The Cytoplasmic portion of the chain corresponds to 402-931 (YRKNHRDFES…VVSLAAEGQY (530 aa)). A required for netrin-mediated axon repulsion of neuronal growth cones region spans residues 402–931 (YRKNHRDFES…VVSLAAEGQY (530 aa)). A Phosphoserine modification is found at Ser-502. One can recognise a ZU5 domain in the interval 530 to 673 (CTAFGTFNSL…LSTYALVGQS (144 aa)). Tyr-568 bears the Phosphotyrosine mark. Residues 694 to 712 (SLEYSIRVYCLDDTQDALK) are interaction with DCC. A Death domain is found at 850–929 (QKLCSSLDAP…ETVVSLAAEG (80 aa)).

This sequence belongs to the unc-5 family. Interacts with DCC (via cytoplasmic domain). Interacts (tyrosine phosphorylated form) with PTPN11. Interacts (via extracellular domain) with FLRT3 (via extracellular domain). Interacts (via Ig-like C2-type domain) with DSCAM (via extracellular domain). Interacts (via death domain) with DAPK1. Interacts (via cytoplasmic domain) with TUBB3; this interaction is decreased by NTN1/Netrin-1. Phosphorylated on different cytoplasmic tyrosine residues. Phosphorylation of Tyr-568 leads to an interaction with PTPN11 phosphatase, suggesting that its activity is regulated by phosphorylation/dephosphorylation. Tyrosine phosphorylation is netrin-dependent. Post-translationally, proteolytically cleaved by caspases during apoptosis. The cleavage does not take place when the receptor is associated with netrin ligand. Its cleavage by caspases is required to induce apoptosis. In terms of tissue distribution, expressed in cortical and cerebellar neurons, including cells of the external and internal granular layer and of the Purkinje cell layer (at protein level). Mainly expressed in regions of differentiating neurons. Highly expressed in brain and lung. Expressed in the cerebellum and the neurons of the hippocampus, with enrichment in neurons of the CA3 hippocampal pyramidal layer. Weakly expressed in testis, ovary, spleen, thymus and bladder. Expressed at very low level in kidney, intestine and salivary gland.

The protein resides in the cell membrane. Its subcellular location is the cell surface. It is found in the synapse. The protein localises to the synaptosome. It localises to the cell projection. The protein resides in the dendrite. Its subcellular location is the axon. It is found in the growth cone. The protein localises to the lamellipodium. It localises to the filopodium. Functionally, receptor for netrin required for axon guidance. Mediates axon repulsion of neuronal growth cones in the developing nervous system upon ligand binding. NTN1/Netrin-1 binding might cause dissociation of UNC5C from polymerized TUBB3 in microtubules and thereby lead to increased microtubule dynamics and axon repulsion. Axon repulsion in growth cones may also be caused by its association with DCC that may trigger signaling for repulsion. Might also collaborate with DSCAM in NTN1-mediated axon repulsion independently of DCC. Also involved in corticospinal tract axon guidance independently of DCC. Involved in dorsal root ganglion axon projection towards the spinal cord. It also acts as a dependence receptor required for apoptosis induction when not associated with netrin ligand. This is Netrin receptor UNC5C (Unc5c) from Mus musculus (Mouse).